The chain runs to 329 residues: tRNA N6-adenosine threonylcarbamoyltransferase (329 aa).

Fe cation contacts are provided by H110 and H114. Substrate contacts are provided by residues 132–136 (VISGG), D165, G178, and N271. D299 contacts Fe cation.

It belongs to the KAE1 / TsaD family. Fe(2+) is required as a cofactor.

Its subcellular location is the cytoplasm. It catalyses the reaction L-threonylcarbamoyladenylate + adenosine(37) in tRNA = N(6)-L-threonylcarbamoyladenosine(37) in tRNA + AMP + H(+). Functionally, required for the formation of a threonylcarbamoyl group on adenosine at position 37 (t(6)A37) in tRNAs that read codons beginning with adenine. Is involved in the transfer of the threonylcarbamoyl moiety of threonylcarbamoyl-AMP (TC-AMP) to the N6 group of A37, together with TsaE and TsaB. TsaD likely plays a direct catalytic role in this reaction. This Neorickettsia sennetsu (strain ATCC VR-367 / Miyayama) (Ehrlichia sennetsu) protein is tRNA N6-adenosine threonylcarbamoyltransferase.